Consider the following 386-residue polypeptide: 3-hydroxyisobutyryl-CoA hydrolase, mitochondrial (386 aa).

The transit peptide at Met1 to Thr32 directs the protein to the mitochondrion. Residues Lys55 and Lys92 each carry the N6-acetyllysine; alternate modification. Lys55 and Lys92 each carry N6-succinyllysine; alternate. Substrate is bound by residues Glu121, Gly146, Glu169, and Asp177. N6-acetyllysine; alternate is present on Lys221. Lys221 is subject to N6-succinyllysine; alternate. The residue at position 234 (Ser234) is a Phosphoserine. The residue at position 257 (Lys257) is an N6-succinyllysine. An N6-acetyllysine; alternate modification is found at Lys297. Lys297 carries the post-translational modification N6-succinyllysine; alternate. Lys301 carries the post-translational modification N6-succinyllysine. Lys353 bears the N6-acetyllysine; alternate mark. The residue at position 353 (Lys353) is an N6-succinyllysine; alternate. Ser356 carries the post-translational modification Phosphoserine. 2 positions are modified to N6-acetyllysine: Lys360 and Lys365. The residue at position 377 (Lys377) is an N6-succinyllysine.

Belongs to the enoyl-CoA hydratase/isomerase family. In terms of tissue distribution, highly expressed in liver and kidney, also detected in heart, muscle and brain (at protein level). Not detected in lung.

The protein localises to the mitochondrion. It carries out the reaction 3-hydroxy-2-methylpropanoyl-CoA + H2O = 3-hydroxy-2-methylpropanoate + CoA + H(+). It participates in amino-acid degradation; L-valine degradation. In terms of biological role, hydrolyzes 3-hydroxyisobutyryl-CoA (HIBYL-CoA), a saline catabolite. Has high activity toward isobutyryl-CoA. Could be an isobutyryl-CoA dehydrogenase that functions in valine catabolism. Also hydrolyzes 3-hydroxypropanoyl-CoA. This Homo sapiens (Human) protein is 3-hydroxyisobutyryl-CoA hydrolase, mitochondrial (HIBCH).